The chain runs to 421 residues: UDP-N-acetylglucosamine 1-carboxyvinyltransferase 1 (421 aa).

A phosphoenolpyruvate-binding site is contributed by 22–23 (KN). Residue Arg-94 coordinates UDP-N-acetyl-alpha-D-glucosamine. Cys-118 (proton donor) is an active-site residue. Cys-118 is subject to 2-(S-cysteinyl)pyruvic acid O-phosphothioketal. Residues 123 to 127 (RPIEL), Asp-310, and Val-332 contribute to the UDP-N-acetyl-alpha-D-glucosamine site.

Belongs to the EPSP synthase family. MurA subfamily.

Its subcellular location is the cytoplasm. The enzyme catalyses phosphoenolpyruvate + UDP-N-acetyl-alpha-D-glucosamine = UDP-N-acetyl-3-O-(1-carboxyvinyl)-alpha-D-glucosamine + phosphate. The protein operates within cell wall biogenesis; peptidoglycan biosynthesis. Its function is as follows. Cell wall formation. Adds enolpyruvyl to UDP-N-acetylglucosamine. In Clostridium perfringens (strain 13 / Type A), this protein is UDP-N-acetylglucosamine 1-carboxyvinyltransferase 1.